Consider the following 152-residue polypeptide: Ribonuclease H (152 aa).

In terms of domain architecture, RNase H type-1 spans 1-142 (MKEVTIYTDG…CDELARAAIA (142 aa)). Mg(2+) is bound by residues Asp-9, Glu-47, Asp-69, and Asp-134.

This sequence belongs to the RNase H family. Monomer. It depends on Mg(2+) as a cofactor.

Its subcellular location is the cytoplasm. It carries out the reaction Endonucleolytic cleavage to 5'-phosphomonoester.. Functionally, endonuclease that specifically degrades the RNA of RNA-DNA hybrids. The protein is Ribonuclease H of Moorella thermoacetica (strain ATCC 39073 / JCM 9320).